We begin with the raw amino-acid sequence, 458 residues long: 5-hydroxytryptamine receptor 2C (458 aa).

An N-terminal signal peptide occupies residues 1–32 (MVNLRNAVHSFLVHLIGLLVWQSDISVSPVAA). Over 33-55 (IVTDIFNTSDGGRFKFPDGVQNW) the chain is Extracellular. N-linked (GlcNAc...) asparagine glycosylation is present at Asn39. Residues 56–80 (PALSIVIIIIMTIGGNILVIMAVSM) form a helical membrane-spanning segment. Residues 81 to 86 (EKKLHN) are Cytoplasmic-facing. The helical transmembrane segment at 87 to 111 (ATNYFLMSLAIADMLVGLLVMPLSL) threads the bilayer. The Extracellular segment spans residues 112–128 (LAILYDYVWPLPRYLCP). The cysteines at positions 127 and 207 are disulfide-linked. A helical transmembrane segment spans residues 129–151 (VWISLDVLFSTASIMHLCAISLD). Thr139 provides a ligand contact to ergotamine. Residues 151 to 153 (DRY) carry the DRY motif; important for ligand-induced conformation changes motif. Over 152–167 (RYVAIRNPIEHSRFNS) the chain is Cytoplasmic. The helical transmembrane segment at 168–189 (RTKAIMKIAIVWAISIGVSVPI) threads the bilayer. At 190 to 213 (PVIGLRDEEKVFVNNTTCVLNDPN) the chain is on the extracellular side. N-linked (GlcNAc...) asparagine glycosylation is present at Asn204. An ergotamine-binding site is contributed by Leu209. The helical transmembrane segment at 214–236 (FVLIGSFVAFFIPLTIMVITYCL) threads the bilayer. Residues 237–311 (TIYVLRRQAL…AINNERKASK (75 aa)) lie on the Cytoplasmic side of the membrane. Positions 274–301 (EENSANPNQDQNARRRKKKERRPRGTMQ) are disordered. The segment covering 287-297 (RRRKKKERRPR) has biased composition (basic residues). A helical membrane pass occupies residues 312 to 336 (VLGIVFFVFLIMWCPFFITNILSVL). Residues Cys337 and Cys341 are joined by a disulfide bond. Topologically, residues 337–347 (CEKSCNQKLME) are extracellular. A helical membrane pass occupies residues 348–370 (KLLNVFVWIGYVCSGINPLVYTL). The NPxxY motif; important for ligand-induced conformation changes and signaling signature appears at 364–368 (NPLVY). The Cytoplasmic segment spans residues 371 to 458 (FNKIYRRAFS…SVVSERISSV (88 aa)). The PDZ-binding signature appears at 456–458 (SSV).

Belongs to the G-protein coupled receptor 1 family. Interacts with MPDZ. Interacts with ARRB2. Interacts with MPP3; this interaction stabilizes the receptor at the plasma membrane and prevents the desensitization of the HTR2C receptor-mediated calcium response. N-glycosylated. In terms of tissue distribution, detected in brain.

Its subcellular location is the cell membrane. With respect to regulation, inhibited by inverse agonist ritanserin. Functionally, G-protein coupled receptor for 5-hydroxytryptamine (serotonin). Also functions as a receptor for various drugs and psychoactive substances, including ergot alkaloid derivatives, 1-2,5,-dimethoxy-4-iodophenyl-2-aminopropane (DOI) and lysergic acid diethylamide (LSD). Ligand binding causes a conformation change that triggers signaling via guanine nucleotide-binding proteins (G proteins) and modulates the activity of downstream effectors. HTR2C is coupled to G(q)/G(11) G alpha proteins and activates phospholipase C-beta, releasing diacylglycerol (DAG) and inositol 1,4,5-trisphosphate (IP3) second messengers that modulate the activity of phosphatidylinositol 3-kinase and promote the release of Ca(2+) ions from intracellular stores, respectively. Beta-arrestin family members inhibit signaling via G proteins and mediate activation of alternative signaling pathways. Regulates neuronal activity via the activation of short transient receptor potential calcium channels in the brain, and thereby modulates the activation of pro-opiomelanocortin neurons and the release of CRH that then regulates the release of corticosterone. Plays a role in the regulation of appetite and eating behavior, responses to anxiogenic stimuli and stress. Plays a role in insulin sensitivity and glucose homeostasis. The protein is 5-hydroxytryptamine receptor 2C of Homo sapiens (Human).